Here is a 255-residue protein sequence, read N- to C-terminus: tRNA (guanine-N(1)-)-methyltransferase (255 aa).

Residues Gly113 and 133-138 each bind S-adenosyl-L-methionine; that span reads IGDYVL.

The protein belongs to the RNA methyltransferase TrmD family. As to quaternary structure, homodimer.

The protein localises to the cytoplasm. It carries out the reaction guanosine(37) in tRNA + S-adenosyl-L-methionine = N(1)-methylguanosine(37) in tRNA + S-adenosyl-L-homocysteine + H(+). Specifically methylates guanosine-37 in various tRNAs. This chain is tRNA (guanine-N(1)-)-methyltransferase, found in Klebsiella pneumoniae (strain 342).